Here is a 307-residue protein sequence, read N- to C-terminus: Small ribosomal subunit biogenesis GTPase RsgA (307 aa).

The CP-type G domain occupies 82–240 (GRYGERIVVA…IADTPGLREV (159 aa)). GTP is bound by residues 131 to 134 (NKAD) and 182 to 190 (GPSGVGKSS). Zn(2+)-binding residues include C264, C269, H271, and C277.

It belongs to the TRAFAC class YlqF/YawG GTPase family. RsgA subfamily. In terms of assembly, monomer. Associates with 30S ribosomal subunit, binds 16S rRNA. Zn(2+) serves as cofactor.

It localises to the cytoplasm. One of several proteins that assist in the late maturation steps of the functional core of the 30S ribosomal subunit. Helps release RbfA from mature subunits. May play a role in the assembly of ribosomal proteins into the subunit. Circularly permuted GTPase that catalyzes slow GTP hydrolysis, GTPase activity is stimulated by the 30S ribosomal subunit. The chain is Small ribosomal subunit biogenesis GTPase RsgA from Gemmatimonas aurantiaca (strain DSM 14586 / JCM 11422 / NBRC 100505 / T-27).